A 222-amino-acid chain; its full sequence is Probable GTP-binding protein EngB (222 aa).

Residues 27–202 enclose the EngB-type G domain; that stretch reads TGIEVAFAGR…AKKLDEWFLG (176 aa). Residues 35–42, 61–65, 81–84, 148–151, and 181–183 each bind GTP; these read GRSNAGKS, GRTQL, DLPG, TKAD, and FSS. 2 residues coordinate Mg(2+): Ser-42 and Thr-63.

The protein belongs to the TRAFAC class TrmE-Era-EngA-EngB-Septin-like GTPase superfamily. EngB GTPase family. The cofactor is Mg(2+).

Functionally, necessary for normal cell division and for the maintenance of normal septation. The sequence is that of Probable GTP-binding protein EngB from Pseudoalteromonas translucida (strain TAC 125).